Reading from the N-terminus, the 141-residue chain is Galactose-6-phosphate isomerase subunit LacA (141 aa).

This sequence belongs to the LacAB/RpiB family. Heteromultimeric protein consisting of LacA and LacB.

The catalysed reaction is aldehydo-D-galactose 6-phosphate = keto-D-tagatose 6-phosphate. It participates in carbohydrate metabolism; D-galactose 6-phosphate degradation; D-tagatose 6-phosphate from D-galactose 6-phosphate: step 1/1. In Streptococcus agalactiae serotype Ia (strain ATCC 27591 / A909 / CDC SS700), this protein is Galactose-6-phosphate isomerase subunit LacA.